We begin with the raw amino-acid sequence, 346 residues long: DNA primase small subunit PriS (346 aa).

Catalysis depends on residues Asp97, Asp99, and Asp278.

The protein belongs to the eukaryotic-type primase small subunit family. In terms of assembly, heterodimer of a small subunit (PriS) and a large subunit (PriL). The cofactor is Mg(2+). Mn(2+) is required as a cofactor.

In terms of biological role, catalytic subunit of DNA primase, an RNA polymerase that catalyzes the synthesis of short RNA molecules used as primers for DNA polymerase during DNA replication. The small subunit contains the primase catalytic core and has DNA synthesis activity on its own. Binding to the large subunit stabilizes and modulates the activity, increasing the rate of DNA synthesis while decreasing the length of the DNA fragments, and conferring RNA synthesis capability. The DNA polymerase activity may enable DNA primase to also catalyze primer extension after primer synthesis. May also play a role in DNA repair. The polypeptide is DNA primase small subunit PriS (Thermococcus onnurineus (strain NA1)).